The following is a 275-amino-acid chain: F420-dependent methylenetetrahydromethanopterin dehydrogenase (275 aa).

Belongs to the MTD family.

It catalyses the reaction 5,10-methylenetetrahydromethanopterin + oxidized coenzyme F420-(gamma-L-Glu)(n) + 2 H(+) = 5,10-methenyl-5,6,7,8-tetrahydromethanopterin + reduced coenzyme F420-(gamma-L-Glu)(n). It participates in one-carbon metabolism; methanogenesis from CO(2); 5,10-methylene-5,6,7,8-tetrahydromethanopterin from 5,10-methenyl-5,6,7,8-tetrahydromethanopterin (coenzyme F420 route): step 1/1. Catalyzes the reversible reduction of methenyl-H(4)MPT(+) to methylene-H(4)MPT. This Methanobrevibacter smithii (strain ATCC 35061 / DSM 861 / OCM 144 / PS) protein is F420-dependent methylenetetrahydromethanopterin dehydrogenase.